The sequence spans 115 residues: Large ribosomal subunit protein uL22 (115 aa).

This sequence belongs to the universal ribosomal protein uL22 family. In terms of assembly, part of the 50S ribosomal subunit.

Functionally, this protein binds specifically to 23S rRNA; its binding is stimulated by other ribosomal proteins, e.g. L4, L17, and L20. It is important during the early stages of 50S assembly. It makes multiple contacts with different domains of the 23S rRNA in the assembled 50S subunit and ribosome. Its function is as follows. The globular domain of the protein is located near the polypeptide exit tunnel on the outside of the subunit, while an extended beta-hairpin is found that lines the wall of the exit tunnel in the center of the 70S ribosome. The protein is Large ribosomal subunit protein uL22 of Coxiella burnetii (strain CbuG_Q212) (Coxiella burnetii (strain Q212)).